Reading from the N-terminus, the 883-residue chain is Valine--tRNA ligase (883 aa).

The 'HIGH' region motif lies at 52 to 62 (PNVTGRLHLGH). The 'KMSKS' region signature appears at 529–533 (KMSKS). Lys-532 is an ATP binding site. A coiled-coil region spans residues 813-848 (LEGLIDFDKEIKRLENELAKWTKEVERVQKKLSNQG).

Belongs to the class-I aminoacyl-tRNA synthetase family. ValS type 1 subfamily. In terms of assembly, monomer.

The protein localises to the cytoplasm. It carries out the reaction tRNA(Val) + L-valine + ATP = L-valyl-tRNA(Val) + AMP + diphosphate. Catalyzes the attachment of valine to tRNA(Val). As ValRS can inadvertently accommodate and process structurally similar amino acids such as threonine, to avoid such errors, it has a 'posttransfer' editing activity that hydrolyzes mischarged Thr-tRNA(Val) in a tRNA-dependent manner. This chain is Valine--tRNA ligase, found in Oceanobacillus iheyensis (strain DSM 14371 / CIP 107618 / JCM 11309 / KCTC 3954 / HTE831).